The following is a 320-amino-acid chain: Tyrosine recombinase XerC (320 aa).

Residues 14 to 104 (ADVREAVASW…SLRSFARHLE (91 aa)) form the Core-binding (CB) domain. The Tyr recombinase domain occupies 125–311 (RLPRPLPVAA…DSARLMSAFE (187 aa)). Active-site residues include arginine 170, lysine 195, histidine 263, arginine 266, and histidine 289. Tyrosine 298 (O-(3'-phospho-DNA)-tyrosine intermediate) is an active-site residue.

Belongs to the 'phage' integrase family. XerC subfamily. Forms a cyclic heterotetrameric complex composed of two molecules of XerC and two molecules of XerD.

It localises to the cytoplasm. Functionally, site-specific tyrosine recombinase, which acts by catalyzing the cutting and rejoining of the recombining DNA molecules. The XerC-XerD complex is essential to convert dimers of the bacterial chromosome into monomers to permit their segregation at cell division. It also contributes to the segregational stability of plasmids. The sequence is that of Tyrosine recombinase XerC from Methylobacterium sp. (strain 4-46).